The following is a 252-amino-acid chain: MFS-type transporter cctQ (252 aa).

Transmembrane regions (helical) follow at residues 54–74 and 116–136; these read IGSL…VVLP and FGSF…IVGF. Residue N179 is glycosylated (N-linked (GlcNAc...) asparagine). 2 consecutive transmembrane segments (helical) span residues 180–200 and 208–228; these read FSIC…WILA and FLVW…YFTT.

Belongs to the major facilitator superfamily.

The protein resides in the membrane. The protein operates within mycotoxin biosynthesis. Functionally, MFS-type transporter; part of the gene cluster that mediates the biosynthesis of the mycotoxin cyclochlorotine, a hepatotoxic and carcinogenic cyclic chlorinated pentapeptide. Most likely responsible for cyclochlorotine secretion and thereby may contribute to intrinsic resistance. The chain is MFS-type transporter cctQ from Talaromyces islandicus (Penicillium islandicum).